The sequence spans 220 residues: MRSSLTMVGTLWAFLSLVTAVTSSTSYFLPYWLFGSQMGKPVSFSTFRRCNYPVRGEGHSLIMVEECGRYASFNAIPSLAWQMCTVVTGAGCALLLLVALAAVLGCCMEELISRMMGRCMGAAQFVGGLLISSGCALYPLGWNSPEIMQTCGNVSNQFQLGTCRLGWAYYCAGGGAAAAMLICTWLSCFAGRNPKPVILVESIMRNTNSYAMELDHCLKP.

The N-terminal stretch at 1–20 (MRSSLTMVGTLWAFLSLVTA) is a signal peptide. Helical transmembrane passes span 86-106 (VVTGAGCALLLLVALAAVLGC) and 122-142 (AAQFVGGLLISSGCALYPLGW). N-linked (GlcNAc...) asparagine glycosylation occurs at N153. Residues 165–185 (LGWAYYCAGGGAAAAMLICTW) traverse the membrane as a helical segment.

This sequence belongs to the LHFP family. As to expression, widely expressed. Expressed at high levels in lung, thymus, skeletal muscle, colon and ovary.

Its subcellular location is the membrane. This Homo sapiens (Human) protein is LHFPL tetraspan subfamily member 1 protein.